Reading from the N-terminus, the 871-residue chain is DNA mismatch repair protein MutS 1 (871 aa).

Residue 614 to 621 participates in ATP binding; that stretch reads GPNMSGKS.

Belongs to the DNA mismatch repair MutS family.

Its function is as follows. This protein is involved in the repair of mismatches in DNA. It is possible that it carries out the mismatch recognition step. This protein has a weak ATPase activity. In Halobacterium salinarum (strain ATCC 29341 / DSM 671 / R1), this protein is DNA mismatch repair protein MutS 1.